We begin with the raw amino-acid sequence, 340 residues long: Phosphate acyltransferase (340 aa).

Belongs to the PlsX family. In terms of assembly, homodimer. Probably interacts with PlsY.

The protein localises to the cytoplasm. It carries out the reaction a fatty acyl-[ACP] + phosphate = an acyl phosphate + holo-[ACP]. It participates in lipid metabolism; phospholipid metabolism. Functionally, catalyzes the reversible formation of acyl-phosphate (acyl-PO(4)) from acyl-[acyl-carrier-protein] (acyl-ACP). This enzyme utilizes acyl-ACP as fatty acyl donor, but not acyl-CoA. The polypeptide is Phosphate acyltransferase (Marinobacter nauticus (strain ATCC 700491 / DSM 11845 / VT8) (Marinobacter aquaeolei)).